The sequence spans 349 residues: Isopentenyl-diphosphate delta-isomerase (349 aa).

6 to 7 lines the substrate pocket; it reads RK. Residues 62–64, serine 93, and asparagine 122 contribute to the FMN site; that span reads AMT. Residue glutamine 152 coordinates substrate. Glutamate 153 serves as a coordination point for Mg(2+). FMN-binding positions include lysine 184, threonine 214, 258–259, and 280–281; these read GG and AG.

This sequence belongs to the IPP isomerase type 2 family. In terms of assembly, homooctamer. Dimer of tetramers. FMN serves as cofactor. It depends on NADPH as a cofactor. The cofactor is Mg(2+).

The protein localises to the cytoplasm. The enzyme catalyses isopentenyl diphosphate = dimethylallyl diphosphate. In terms of biological role, involved in the biosynthesis of isoprenoids. Catalyzes the 1,3-allylic rearrangement of the homoallylic substrate isopentenyl (IPP) to its allylic isomer, dimethylallyl diphosphate (DMAPP). The chain is Isopentenyl-diphosphate delta-isomerase from Bacillus cereus (strain AH820).